Consider the following 425-residue polypeptide: Riboflavin biosynthesis protein RibBA (425 aa).

A DHBP synthase region spans residues 1 to 204; sequence MTRLDSVERA…IADLIEWRRK (204 aa). D-ribulose 5-phosphate contacts are provided by residues 28 to 29, D33, 141 to 145, and E165; these read RE and RPGHT. E29 is a Mg(2+) binding site. H144 provides a ligand contact to Mg(2+). A GTP cyclohydrolase II region spans residues 205–425; that stretch reads HEKHIERVAE…HLPGEFGGAL (221 aa). Residue 259–263 participates in GTP binding; it reads RVHSE. Zn(2+) contacts are provided by C264, C275, and C277. GTP is bound by residues Q280, 303–305, and T325; that span reads EGR. D337 serves as the catalytic Proton acceptor; for GTP cyclohydrolase activity. Catalysis depends on R339, which acts as the Nucleophile; for GTP cyclohydrolase activity. GTP contacts are provided by T360 and K365.

In the N-terminal section; belongs to the DHBP synthase family. This sequence in the C-terminal section; belongs to the GTP cyclohydrolase II family. The cofactor is Mg(2+). Mn(2+) serves as cofactor. Zn(2+) is required as a cofactor.

It carries out the reaction D-ribulose 5-phosphate = (2S)-2-hydroxy-3-oxobutyl phosphate + formate + H(+). It catalyses the reaction GTP + 4 H2O = 2,5-diamino-6-hydroxy-4-(5-phosphoribosylamino)-pyrimidine + formate + 2 phosphate + 3 H(+). It participates in cofactor biosynthesis; riboflavin biosynthesis; 2-hydroxy-3-oxobutyl phosphate from D-ribulose 5-phosphate: step 1/1. Its pathway is cofactor biosynthesis; riboflavin biosynthesis; 5-amino-6-(D-ribitylamino)uracil from GTP: step 1/4. In terms of biological role, catalyzes the conversion of D-ribulose 5-phosphate to formate and 3,4-dihydroxy-2-butanone 4-phosphate. Its function is as follows. Catalyzes the conversion of GTP to 2,5-diamino-6-ribosylamino-4(3H)-pyrimidinone 5'-phosphate (DARP), formate and pyrophosphate. This chain is Riboflavin biosynthesis protein RibBA, found in Mycobacterium marinum (strain ATCC BAA-535 / M).